Here is a 174-residue protein sequence, read N- to C-terminus: Gamma-crystallin C (174 aa).

Beta/gamma crystallin 'Greek key' domains lie at 2-40 (GKIT…RVES) and 41-83 (GCWM…CLIP). The residue at position 23 (Cys23) is an S-methylcysteine. Residues 84 to 87 (QTGS) form a connecting peptide region. Beta/gamma crystallin 'Greek key' domains are found at residues 88–128 (HRLR…HVLE) and 129–171 (GCWV…RRVV).

The protein belongs to the beta/gamma-crystallin family. As to quaternary structure, monomer.

In terms of biological role, crystallins are the dominant structural components of the vertebrate eye lens. The sequence is that of Gamma-crystallin C (CRYGC) from Macaca mulatta (Rhesus macaque).